The primary structure comprises 391 residues: Phosphoglycerate kinase (391 aa).

Substrate is bound by residues 16 to 18 (DLN), Arg-31, 54 to 57 (HLGR), Arg-108, and Arg-141. Residues Lys-192, Glu-314, and 340 to 343 (GGDT) contribute to the ATP site.

Belongs to the phosphoglycerate kinase family. In terms of assembly, monomer.

The protein resides in the cytoplasm. It carries out the reaction (2R)-3-phosphoglycerate + ATP = (2R)-3-phospho-glyceroyl phosphate + ADP. The protein operates within carbohydrate degradation; glycolysis; pyruvate from D-glyceraldehyde 3-phosphate: step 2/5. This chain is Phosphoglycerate kinase, found in Coxiella burnetii (strain RSA 493 / Nine Mile phase I).